A 448-amino-acid chain; its full sequence is Pentatricopeptide repeat-containing protein At1g80550, mitochondrial (448 aa).

The transit peptide at 1–21 directs the protein to the mitochondrion; sequence MLLLRRLNRVRIASPYSVRLL. PPR repeat units lie at residues 80-110, 116-146, 150-186, 188-222, 223-257, 258-292, 293-327, 331-359, 360-394, and 395-429; these read TTET…MIGN, NHVT…LDDF, DETS…GFSV, NTKI…GVTK, DLFS…RMKL, DVVA…GCEP, NVAT…GCQP, TYMC…GVRP, KMDT…GDTP, and DSAA…GLSP.

It belongs to the PPR family. P subfamily.

It is found in the mitochondrion. The chain is Pentatricopeptide repeat-containing protein At1g80550, mitochondrial from Arabidopsis thaliana (Mouse-ear cress).